Reading from the N-terminus, the 466-residue chain is DNA polymerase delta subunit 3 (466 aa).

Residue Ala2 is modified to N-acetylalanine. Disordered stretches follow at residues 145–218 (PAES…KEVM) and 255–466 (EQEV…FQRK). 3 stretches are compositionally biased toward basic and acidic residues: residues 205 to 218 (DANK…KEVM), 255 to 265 (EQEVKEEKKVE), and 281 to 297 (DLKK…MQQK). Lys259 participates in a covalent cross-link: Glycyl lysine isopeptide (Lys-Gly) (interchain with G-Cter in SUMO); alternate. Residue Lys259 forms a Glycyl lysine isopeptide (Lys-Gly) (interchain with G-Cter in SUMO2); alternate linkage. A Glycyl lysine isopeptide (Lys-Gly) (interchain with G-Cter in SUMO2) cross-link involves residue Lys262. Ser308 carries the phosphoserine modification. The span at 350-360 (PSPPPPSPSPE) shows a compositional bias: pro residues. Phosphoserine is present on residues Ser407 and Ser409. A Phosphothreonine modification is found at Thr411. Residue Ser413 is modified to Phosphoserine. Basic and acidic residues predominate over residues 432 to 441 (VKKEPKEERK). A Glycyl lysine isopeptide (Lys-Gly) (interchain with G-Cter in SUMO); alternate cross-link involves residue Lys433. Lys433 is covalently cross-linked (Glycyl lysine isopeptide (Lys-Gly) (interchain with G-Cter in SUMO2); alternate). A PIP-box motif is present at residues 456–463 (QVAITGFF).

In terms of assembly, component of both the DNA polymerase delta and DNA polymerase zeta complexes. The tetrameric DNA polymerase delta complex (Pol-delta4), which consists of POLD1/p125, POLD2/p50, POLD3/p66/p68 and POLD4/p12, with POLD1 bearing DNA polymerase and 3' to 5' proofreading exonuclease activities. Within this complex, directly interacts with POLD2. Following stress caused by DNA damaging agents or by replication stress, POLD4 is degraded and Pol-delta4 is converted into a trimeric form of the complex (Pol-delta3), which consists of POLD1, POLD2 and POLD3. Pol-delta3 is the major form occurring at S phase replication sites, as well as DNA damage sites. Directly interacts with PCNA, as do POLD1 and POLD4; this interaction stimulates Pol-delta polymerase activity. Component of the DNA polymerase zeta complex (POLZ), which consists of REV3L, MAD2L2, POLD2 and POLD3, with REV3L bearing DNA polymerase catalytic activity. The DNA polymerase delta complex interacts with POLDIP2; this interaction is probably mediated through direct binding to POLD2. In terms of processing, ubiquitinated, but not targeted to the proteasome. Sumoylated. Sumoylation by SUMO3 may be predominant.

Its subcellular location is the cytoplasm. The protein localises to the nucleus. In terms of biological role, accessory component of both the DNA polymerase delta complex and the DNA polymerase zeta complex. As a component of the trimeric and tetrameric DNA polymerase delta complexes (Pol-delta3 and Pol-delta4, respectively), plays a role in high fidelity genome replication, including in lagging strand synthesis, and repair. Required for optimal Pol-delta activity. Stabilizes the Pol-delta complex and plays a major role in Pol-delta stimulation by PCNA. Pol-delta3 and Pol-delta4 are characterized by the absence or the presence of POLD4. They exhibit differences in catalytic activity. Most notably, Pol-delta3 shows higher proofreading activity than Pol-delta4. Although both Pol-delta3 and Pol-delta4 process Okazaki fragments in vitro, Pol-delta3 may also be better suited to fulfill this task, exhibiting near-absence of strand displacement activity compared to Pol-delta4 and stalling on encounter with the 5'-blocking oligonucleotides. Pol-delta3 idling process may avoid the formation of a gap, while maintaining a nick that can be readily ligated. Along with DNA polymerase kappa, DNA polymerase delta carries out approximately half of nucleotide excision repair (NER) synthesis following UV irradiation. In this context, POLD3, along with PCNA and RFC1-replication factor C complex, is required to recruit POLD1, the catalytic subunit of the polymerase delta complex, to DNA damage sites. Under conditions of DNA replication stress, required for the repair of broken replication forks through break-induced replication (BIR). Involved in the translesion synthesis (TLS) of templates carrying O6-methylguanine or abasic sites performed by Pol-delta4, independently of DNA polymerase zeta (REV3L) or eta (POLH). Facilitates abasic site bypass by DNA polymerase delta by promoting extension from the nucleotide inserted opposite the lesion. Also involved in TLS, as a component of the tetrameric DNA polymerase zeta complex. Along with POLD2, dramatically increases the efficiency and processivity of DNA synthesis of the DNA polymerase zeta complex compared to the minimal zeta complex, consisting of only REV3L and REV7. This is DNA polymerase delta subunit 3 (POLD3) from Bos taurus (Bovine).